The sequence spans 243 residues: Protein YagJ (243 aa).

The sequence is that of Protein YagJ (yagJ) from Escherichia coli (strain K12).